We begin with the raw amino-acid sequence, 241 residues long: MELATEPIEGVLLVDKPQGRTSFSLIRSLVRLIGVKKIGHAGTLDPFATGVMVMLIGRKFTRLSDIMLFEDKEYSAVAHLGTTTDTYDCDGKIVGRSKKVPTMEEVLECTSYFQGEIQQVPPMFSAKKVQGKKLYEYARQGLSIERSFATVRVDLRLIKYEYPRLHFVVKCSKGTYIRSIAHELGNMLGCGAYLEELRRLRSGNFSIDQCIDGNHLDEPGFDVFPHLRDANGLILQPTPVL.

The Nucleophile role is filled by Asp-45.

This sequence belongs to the pseudouridine synthase TruB family. Type 1 subfamily.

It carries out the reaction uridine(55) in tRNA = pseudouridine(55) in tRNA. Functionally, responsible for synthesis of pseudouridine from uracil-55 in the psi GC loop of transfer RNAs. The sequence is that of tRNA pseudouridine synthase B from Chlamydia muridarum (strain MoPn / Nigg).